The following is a 633-amino-acid chain: GRAM domain-containing protein 4 (633 aa).

Disordered stretches follow at residues Met1–Arg46, Leu72–Gly109, and Val182–Gly216. Over residues Pro27–Arg39 the composition is skewed to basic and acidic residues. Phosphoserine occurs at positions 75 and 79. The segment covering Ser95–Asp104 has biased composition (basic and acidic residues). A coiled-coil region spans residues His134–Gln190. Residues Gln190–Ser205 are compositionally biased toward low complexity. 3 consecutive transmembrane segments (helical) span residues Val295 to Leu315, Thr389 to Tyr409, and Leu411 to Phe431. Residues Gly500 to Lys578 form the GRAM domain.

As to quaternary structure, interacts with RTN4 (isoform B).

It localises to the mitochondrion membrane. Its subcellular location is the endoplasmic reticulum membrane. Functionally, plays a role as a mediator of E2F1-induced apoptosis in the absence of p53/TP53. Inhibits TLR9 response to nucelic acids and regulates TLR9-mediated innate immune response. The polypeptide is GRAM domain-containing protein 4 (Mus musculus (Mouse)).